The following is a 243-amino-acid chain: Ubiquinone/menaquinone biosynthesis C-methyltransferase UbiE (243 aa).

S-adenosyl-L-methionine is bound by residues Thr-69, Asp-90, and 116–117 (DA).

Belongs to the class I-like SAM-binding methyltransferase superfamily. MenG/UbiE family.

The catalysed reaction is a 2-demethylmenaquinol + S-adenosyl-L-methionine = a menaquinol + S-adenosyl-L-homocysteine + H(+). It carries out the reaction a 2-methoxy-6-(all-trans-polyprenyl)benzene-1,4-diol + S-adenosyl-L-methionine = a 5-methoxy-2-methyl-3-(all-trans-polyprenyl)benzene-1,4-diol + S-adenosyl-L-homocysteine + H(+). Its pathway is quinol/quinone metabolism; menaquinone biosynthesis; menaquinol from 1,4-dihydroxy-2-naphthoate: step 2/2. The protein operates within cofactor biosynthesis; ubiquinone biosynthesis. Its function is as follows. Methyltransferase required for the conversion of demethylmenaquinol (DMKH2) to menaquinol (MKH2) and the conversion of 2-polyprenyl-6-methoxy-1,4-benzoquinol (DDMQH2) to 2-polyprenyl-3-methyl-6-methoxy-1,4-benzoquinol (DMQH2). This is Ubiquinone/menaquinone biosynthesis C-methyltransferase UbiE from Burkholderia multivorans (strain ATCC 17616 / 249).